The sequence spans 233 residues: Large ribosomal subunit protein uL1 (233 aa).

Belongs to the universal ribosomal protein uL1 family. Part of the 50S ribosomal subunit.

In terms of biological role, binds directly to 23S rRNA. The L1 stalk is quite mobile in the ribosome, and is involved in E site tRNA release. Functionally, protein L1 is also a translational repressor protein, it controls the translation of the L11 operon by binding to its mRNA. This Shewanella loihica (strain ATCC BAA-1088 / PV-4) protein is Large ribosomal subunit protein uL1.